Reading from the N-terminus, the 940-residue chain is Valine--tRNA ligase (940 aa).

The 'HIGH' region signature appears at 47-57 (PNVTGILHMGH). The 'KMSKS' region motif lies at 564–568 (KLSKS). An ATP-binding site is contributed by K567. Positions 872–938 (PMEHITKERN…LQSILDKLAS (67 aa)) form a coiled coil.

This sequence belongs to the class-I aminoacyl-tRNA synthetase family. ValS type 1 subfamily. Monomer.

The protein resides in the cytoplasm. The enzyme catalyses tRNA(Val) + L-valine + ATP = L-valyl-tRNA(Val) + AMP + diphosphate. In terms of biological role, catalyzes the attachment of valine to tRNA(Val). As ValRS can inadvertently accommodate and process structurally similar amino acids such as threonine, to avoid such errors, it has a 'posttransfer' editing activity that hydrolyzes mischarged Thr-tRNA(Val) in a tRNA-dependent manner. This chain is Valine--tRNA ligase, found in Chlamydia caviae (strain ATCC VR-813 / DSM 19441 / 03DC25 / GPIC) (Chlamydophila caviae).